The following is a 643-amino-acid chain: Lysophospholipase ARB_05919 (643 aa).

A signal peptide spans 1–22 (MMFIPATLGTFVLASLLPATVG). Positions 50 to 597 (DCPSTKPAVR…KMYCWDGTLN (548 aa)) constitute a PLA2c domain. Residues N142, N176, N195, N293, N466, N472, N482, N503, N524, N533, N552, and N597 are each glycosylated (N-linked (GlcNAc...) asparagine).

This sequence belongs to the lysophospholipase family.

The protein resides in the secreted. It catalyses the reaction a 1-acyl-sn-glycero-3-phosphocholine + H2O = sn-glycerol 3-phosphocholine + a fatty acid + H(+). Its function is as follows. Catalyzes the release of fatty acids from lysophospholipids. Phospholipase B may well contribute to pathogenicity by abetting the fungus in damaging host cell membranes. The protein is Lysophospholipase ARB_05919 of Arthroderma benhamiae (strain ATCC MYA-4681 / CBS 112371) (Trichophyton mentagrophytes).